The primary structure comprises 306 residues: Tyrosine recombinase XerC (306 aa).

The Core-binding (CB) domain maps to 1-85; it reads MQQQLEQFLA…AIKSFFEYLQ (85 aa). Residues 106–289 form the Tyr recombinase domain; sequence FLPKAITVAQ…SNDRAVKYDQ (184 aa). Active-site residues include R147, K171, H241, R244, and H267. The O-(3'-phospho-DNA)-tyrosine intermediate role is filled by Y276.

Belongs to the 'phage' integrase family. XerC subfamily. Forms a cyclic heterotetrameric complex composed of two molecules of XerC and two molecules of XerD.

The protein localises to the cytoplasm. Site-specific tyrosine recombinase, which acts by catalyzing the cutting and rejoining of the recombining DNA molecules. The XerC-XerD complex is essential to convert dimers of the bacterial chromosome into monomers to permit their segregation at cell division. It also contributes to the segregational stability of plasmids. This Herpetosiphon aurantiacus (strain ATCC 23779 / DSM 785 / 114-95) protein is Tyrosine recombinase XerC.